Reading from the N-terminus, the 149-residue chain is Urease accessory protein UreE (149 aa).

Belongs to the UreE family.

Its subcellular location is the cytoplasm. Its function is as follows. Involved in urease metallocenter assembly. Binds nickel. Probably functions as a nickel donor during metallocenter assembly. The sequence is that of Urease accessory protein UreE from Prochlorococcus marinus (strain MIT 9215).